The primary structure comprises 452 residues: Methionine aminopeptidase 2 (452 aa).

The segment at 1-96 (MAVQALPEIN…VPLSTLFPNN (96 aa)) is disordered. Residues 18-35 (GAANAAAKGQAAQGTAGN) are compositionally biased toward low complexity. Residues 36-53 (DDAENDESDEDKEDEQEV) are compositionally biased toward acidic residues. The segment covering 62–77 (GKKKKKKTKKKKKKGT) has biased composition (basic residues). Residue H202 participates in substrate binding. Residues D222, D233, and H302 each coordinate a divalent metal cation. H310 is a substrate binding site. Positions 338 and 433 each coordinate a divalent metal cation.

It belongs to the peptidase M24A family. Methionine aminopeptidase eukaryotic type 2 subfamily. Co(2+) serves as cofactor. Zn(2+) is required as a cofactor. It depends on Mn(2+) as a cofactor. The cofactor is Fe(2+).

It localises to the cytoplasm. The enzyme catalyses Release of N-terminal amino acids, preferentially methionine, from peptides and arylamides.. Its function is as follows. Cotranslationally removes the N-terminal methionine from nascent proteins. The N-terminal methionine is often cleaved when the second residue in the primary sequence is small and uncharged (Met-Ala-, Cys, Gly, Pro, Ser, Thr, or Val). This is Methionine aminopeptidase 2 from Coccidioides posadasii (strain C735) (Valley fever fungus).